Consider the following 80-residue polypeptide: RNA-binding protein Hfq (80 aa).

Residues 10 to 70 enclose the Sm domain; sequence DIFLNNARKE…ISTVSPAKPI (61 aa).

This sequence belongs to the Hfq family. As to quaternary structure, homohexamer.

Its function is as follows. RNA chaperone that binds small regulatory RNA (sRNAs) and mRNAs to facilitate mRNA translational regulation in response to envelope stress, environmental stress and changes in metabolite concentrations. Also binds with high specificity to tRNAs. The polypeptide is RNA-binding protein Hfq (Clostridium perfringens (strain SM101 / Type A)).